Consider the following 425-residue polypeptide: Dihydroorotase (425 aa).

Zn(2+) is bound by residues His-60 and His-62. Residues 62–64 (HLR) and Asn-94 each bind substrate. 3 residues coordinate Zn(2+): Asp-152, His-179, and His-232. Residue Asn-278 participates in substrate binding. Zn(2+) is bound at residue Asp-305. Asp-305 is a catalytic residue. His-309 is a substrate binding site.

It belongs to the metallo-dependent hydrolases superfamily. DHOase family. Class I DHOase subfamily. Requires Zn(2+) as cofactor.

The enzyme catalyses (S)-dihydroorotate + H2O = N-carbamoyl-L-aspartate + H(+). Its pathway is pyrimidine metabolism; UMP biosynthesis via de novo pathway; (S)-dihydroorotate from bicarbonate: step 3/3. Its function is as follows. Catalyzes the reversible cyclization of carbamoyl aspartate to dihydroorotate. The protein is Dihydroorotase of Syntrophotalea carbinolica (strain DSM 2380 / NBRC 103641 / GraBd1) (Pelobacter carbinolicus).